A 531-amino-acid chain; its full sequence is Probable bifunctional methylthioribulose-1-phosphate dehydratase/enolase-phosphatase E1 2 (531 aa).

The methylthioribulose-1-phosphate dehydratase stretch occupies residues 1–248 (MGVPSEGAVG…AIKLHQLGLD (248 aa)). C120 is a substrate binding site. H138 and H140 together coordinate Zn(2+). E163 acts as the Proton donor/acceptor; for methylthioribulose-1-phosphate dehydratase activity in catalysis. Residue H213 participates in Zn(2+) binding. The tract at residues 292–531 (ILLDIEGTTT…FRTIETFLEI (240 aa)) is enolase-phosphatase E1. 2 residues coordinate Mg(2+): D295 and E297. Residues 430-431 (SS) and K464 each bind substrate. D490 contributes to the Mg(2+) binding site.

This sequence in the N-terminal section; belongs to the aldolase class II family. MtnB subfamily. The protein in the C-terminal section; belongs to the HAD-like hydrolase superfamily. MasA/MtnC family. It depends on Zn(2+) as a cofactor. Mg(2+) serves as cofactor.

The catalysed reaction is 5-(methylsulfanyl)-D-ribulose 1-phosphate = 5-methylsulfanyl-2,3-dioxopentyl phosphate + H2O. It carries out the reaction 5-methylsulfanyl-2,3-dioxopentyl phosphate + H2O = 1,2-dihydroxy-5-(methylsulfanyl)pent-1-en-3-one + phosphate. It functions in the pathway amino-acid biosynthesis; L-methionine biosynthesis via salvage pathway; L-methionine from S-methyl-5-thio-alpha-D-ribose 1-phosphate: step 2/6. Its pathway is amino-acid biosynthesis; L-methionine biosynthesis via salvage pathway; L-methionine from S-methyl-5-thio-alpha-D-ribose 1-phosphate: step 3/6. The protein operates within amino-acid biosynthesis; L-methionine biosynthesis via salvage pathway; L-methionine from S-methyl-5-thio-alpha-D-ribose 1-phosphate: step 4/6. This chain is Probable bifunctional methylthioribulose-1-phosphate dehydratase/enolase-phosphatase E1 2, found in Vitis vinifera (Grape).